Consider the following 768-residue polypeptide: Phosphoribosylformylglycinamidine synthase subunit PurL (768 aa).

His44 is an active-site residue. ATP contacts are provided by Tyr47 and Lys86. Glu88 contributes to the Mg(2+) binding site. Residues 89–92 and Arg111 each bind substrate; that span reads SHNH. Residue His90 is the Proton acceptor of the active site. Asp112 provides a ligand contact to Mg(2+). Gln235 lines the substrate pocket. Asp263 contacts Mg(2+). 307-309 contacts substrate; the sequence is ESQ. Asp518 and Gly555 together coordinate ATP. Residue Asn556 coordinates Mg(2+). Ser558 is a substrate binding site.

It belongs to the FGAMS family. Monomer. Part of the FGAM synthase complex composed of 1 PurL, 1 PurQ and 2 PurS subunits.

The protein localises to the cytoplasm. It carries out the reaction N(2)-formyl-N(1)-(5-phospho-beta-D-ribosyl)glycinamide + L-glutamine + ATP + H2O = 2-formamido-N(1)-(5-O-phospho-beta-D-ribosyl)acetamidine + L-glutamate + ADP + phosphate + H(+). It participates in purine metabolism; IMP biosynthesis via de novo pathway; 5-amino-1-(5-phospho-D-ribosyl)imidazole from N(2)-formyl-N(1)-(5-phospho-D-ribosyl)glycinamide: step 1/2. In terms of biological role, part of the phosphoribosylformylglycinamidine synthase complex involved in the purines biosynthetic pathway. Catalyzes the ATP-dependent conversion of formylglycinamide ribonucleotide (FGAR) and glutamine to yield formylglycinamidine ribonucleotide (FGAM) and glutamate. The FGAM synthase complex is composed of three subunits. PurQ produces an ammonia molecule by converting glutamine to glutamate. PurL transfers the ammonia molecule to FGAR to form FGAM in an ATP-dependent manner. PurS interacts with PurQ and PurL and is thought to assist in the transfer of the ammonia molecule from PurQ to PurL. The sequence is that of Phosphoribosylformylglycinamidine synthase subunit PurL from Synechococcus sp. (strain JA-2-3B'a(2-13)) (Cyanobacteria bacterium Yellowstone B-Prime).